The sequence spans 247 residues: 2,3-bisphosphoglycerate-dependent phosphoglycerate mutase (247 aa).

Substrate contacts are provided by residues 8–15 (RHGESQWN), 21–22 (TG), arginine 60, 87–90 (ERHY), lysine 98, 114–115 (RR), and 183–184 (GN). The active-site Tele-phosphohistidine intermediate is histidine 9. Catalysis depends on glutamate 87, which acts as the Proton donor/acceptor.

This sequence belongs to the phosphoglycerate mutase family. BPG-dependent PGAM subfamily.

The catalysed reaction is (2R)-2-phosphoglycerate = (2R)-3-phosphoglycerate. It participates in carbohydrate degradation; glycolysis; pyruvate from D-glyceraldehyde 3-phosphate: step 3/5. Catalyzes the interconversion of 2-phosphoglycerate and 3-phosphoglycerate. The protein is 2,3-bisphosphoglycerate-dependent phosphoglycerate mutase of Chlorobium phaeobacteroides (strain DSM 266 / SMG 266 / 2430).